A 126-amino-acid chain; its full sequence is Probable V-type proton ATPase subunit G (126 aa).

Residues 23–45 form a disordered region; that stretch reads NEARKRKLQRTKQAKQEAQAEVE. Over residues 26 to 35 the composition is skewed to basic residues; the sequence is RKRKLQRTKQ.

It belongs to the V-ATPase G subunit family. In terms of assembly, V-ATPase is a heteromultimeric enzyme made up of two complexes: the ATP-hydrolytic V1 complex and the proton translocation V0 complex. The V1 complex consists of three catalytic AB heterodimers that form a heterohexamer, three peripheral stalks each consisting of EG heterodimers, one central rotor including subunits D and F, and the regulatory subunits C and H. The proton translocation complex V0 consists of the proton transport subunit a, a ring of proteolipid subunits c9c'', rotary subunit d, subunits e and f, and the accessory subunits vah-19/Ac45 and vah-20/PRR.

Its function is as follows. Subunit of the V1 complex of vacuolar(H+)-ATPase (V-ATPase), a multisubunit enzyme composed of a peripheral complex (V1) that hydrolyzes ATP and a membrane integral complex (V0) that translocates protons. V-ATPase is responsible for acidifying and maintaining the pH of intracellular compartments and in some cell types, is targeted to the plasma membrane, where it is responsible for acidifying the extracellular environment. In neurons, required for necrotic cell death by promoting intracellular acidification. This Caenorhabditis briggsae protein is Probable V-type proton ATPase subunit G.